The primary structure comprises 255 residues: Flagellar brake protein YcgR (255 aa).

A PilZ domain is found at 122–240 (QRRTYFRINT…ERDLQQVIFE (119 aa)).

It belongs to the YcgR family. In terms of assembly, monomer. Interacts with the flagellar basal bodies.

The protein localises to the bacterial flagellum basal body. Functionally, acts as a flagellar brake, regulating swimming and swarming in a bis-(3'-5') cyclic diguanylic acid (c-di-GMP)-dependent manner. Binds 1 c-di-GMP dimer per subunit. Increasing levels of c-di-GMP lead to decreased motility. The protein is Flagellar brake protein YcgR of Pectobacterium carotovorum subsp. carotovorum (strain PC1).